Here is a 448-residue protein sequence, read N- to C-terminus: Tryptophan dimethylallyltransferase 2 (448 aa).

L-tryptophan-binding positions include 80–81 (IL) and Glu89. Substrate is bound by residues Arg100, Lys186, and Tyr188. Residues Tyr190 and Arg249 each contribute to the L-tryptophan site. The substrate site is built by Arg262, Lys264, Tyr266, Gln348, Tyr350, Tyr414, and Tyr418.

Belongs to the tryptophan dimethylallyltransferase family. In terms of assembly, homodimer.

It catalyses the reaction L-tryptophan + dimethylallyl diphosphate = 4-(3-methylbut-2-enyl)-L-tryptophan + diphosphate. Its pathway is alkaloid biosynthesis; ergot alkaloid biosynthesis. Its function is as follows. Catalyzes the first step of ergot alkaloid biosynthesis. Ergot alkaloids, which are produced by endophyte fungi, can enhance plant host fitness, but also cause livestock toxicosis to host plants. The polypeptide is Tryptophan dimethylallyltransferase 2 (dmaW2) (Claviceps purpurea (strain 20.1) (Ergot fungus)).